A 359-amino-acid polypeptide reads, in one-letter code: WAT1-related protein At5g64700 (359 aa).

The next 10 helical transmembrane spans lie at 10–30 (LMVTIIQVIYTIMFLISKAVF), 37–57 (FVFVFYRQAFATIFLAPLAFF), 66–86 (LSFVTFIKIFMLSLFGVTLSL), 100–120 (LAAATTASLPAITFFLALLFG), 135–155 (LVGITVCMGGVIILAIYKGPL), 186–206 (WLKGCVLMITSNILWGLWLVL), 218–238 (LYFTTLHCLLSSIQSFVIAIA), 256–276 (AVIYCGFIVTGVAYYLQSWVI), 282–302 (VFLSMFTPLSLLFTLLSSAIL), and 306–326 (IISLGSIVGGLLLIIGLYCVL). EamA domains follow at residues 18 to 136 (IYTI…AKLV) and 198 to 326 (ILWG…YCVL).

Belongs to the drug/metabolite transporter (DMT) superfamily. Plant drug/metabolite exporter (P-DME) (TC 2.A.7.4) family.

It localises to the membrane. The chain is WAT1-related protein At5g64700 from Arabidopsis thaliana (Mouse-ear cress).